We begin with the raw amino-acid sequence, 291 residues long: MEMO1 family protein PH1626 (291 aa).

The protein belongs to the MEMO1 family.

In Pyrococcus horikoshii (strain ATCC 700860 / DSM 12428 / JCM 9974 / NBRC 100139 / OT-3), this protein is MEMO1 family protein PH1626.